We begin with the raw amino-acid sequence, 310 residues long: Tryptophan 2,3-dioxygenase (310 aa).

A disordered region spans residues 1–39 (MQPPGNDAPAGCPFSGARAQGTQAAHEAPHVPGDAGEQA). Substrate-binding positions include 79-83 (FIIQH), Tyr141, and Arg145. His268 serves as a coordination point for heme. Residue Thr282 coordinates substrate.

This sequence belongs to the tryptophan 2,3-dioxygenase family. In terms of assembly, homotetramer. The cofactor is heme.

The catalysed reaction is L-tryptophan + O2 = N-formyl-L-kynurenine. It functions in the pathway amino-acid degradation; L-tryptophan degradation via kynurenine pathway; L-kynurenine from L-tryptophan: step 1/2. Heme-dependent dioxygenase that catalyzes the oxidative cleavage of the L-tryptophan (L-Trp) pyrrole ring and converts L-tryptophan to N-formyl-L-kynurenine. Catalyzes the oxidative cleavage of the indole moiety. This Burkholderia multivorans (strain ATCC 17616 / 249) protein is Tryptophan 2,3-dioxygenase.